The sequence spans 410 residues: Monoglucosyldiacylglycerol epimerase (410 aa).

Residues 1 to 14 (MAMAWLMGLGLALA) form the signal peptide. 2 helical membrane passes run 71 to 91 (ALVM…WQGF) and 96 to 116 (LILA…SAIA). The Proton acceptor role is filled by Tyr320. A helical membrane pass occupies residues 380–400 (IIVTINPITFIAFPVKEFFVS).

Belongs to the short-chain dehydrogenases/reductases (SDR) family.

The protein localises to the membrane. The catalysed reaction is a 1,2-diacyl-3-O-(beta-D-glucopyranosyl)-sn-glycerol = a 1,2-diacyl-3-O-(beta-D-galactosyl)-sn-glycerol. Functionally, involved in the biosynthesis of galactolipids found in the photosynthetic membranes. Catalyzes the isomerization of monoglucosyldiacylglycerol (GlcDG) to yield monogalactosyldiacylglycerol (MGDG). The chain is Monoglucosyldiacylglycerol epimerase from Synechocystis sp. (strain ATCC 27184 / PCC 6803 / Kazusa).